A 176-amino-acid polypeptide reads, in one-letter code: Probable chorismate pyruvate-lyase (176 aa).

Residues R70, L108, and E166 each coordinate substrate.

Belongs to the UbiC family.

It is found in the cytoplasm. The catalysed reaction is chorismate = 4-hydroxybenzoate + pyruvate. The protein operates within cofactor biosynthesis; ubiquinone biosynthesis. In terms of biological role, removes the pyruvyl group from chorismate, with concomitant aromatization of the ring, to provide 4-hydroxybenzoate (4HB) for the ubiquinone pathway. This is Probable chorismate pyruvate-lyase from Dechloromonas aromatica (strain RCB).